Reading from the N-terminus, the 642-residue chain is MPVITLPDGSQRHYDHAVSPMDVALDIGPGLAKACIAGRVNGELVDACDLIENDAQLSIITAKDEEGLEIIRHSCAHLLGHAIKQLWPHTKMAIGPVIDNGFYYDVDLDRTLTQEDVEALEKRMHELAEKNYDVIKKKVSWHEARETFANRGESYKVSILDENIAHDDKPGLYFHEEYVDMCRGPHVPNMRFCHHFKLMKTAGAYWRGDSNNKMLQRIYGTAWADKKALNAYLQRLEEAAKRDHRKIGKQLDLYHMQEEAPGMVFWHNDGWTIFRELEVFVRSKLKEYQYQEVKGPFMMDRVLWEKTGHWDNYKDAMFTTSSENREYCIKPMNCPGHVQIFNQGLKSYRDLPLRMAEFGSCHRNEPSGSLHGLMRVRGFTQDDAHIFCTEEQIRDEVNGCIRLVYDMYSTFGFEKIVVKLSTRPEKRIGSDEMWDRAEADLAVALEENNIPFEYQLGEGAFYGPKIEFTLYDCLDRAWQCGTVQLDFSLPSRLSASYVGEDNERKVPVMIHRAILGSMERFIGILTEEFAGFFPTWLAPVQVVIMNITDSQSEYVNELTQKLSNAGIRVKADLRNEKIGFKIREHTLRRVPYMLVCGDKEVESGKIAVRTRRGKDLGSMDVNEVIEKLQQEIRSRSLKQLEE.

Residues 1–61 (MPVITLPDGS…ENDAQLSIIT (61 aa)) enclose the TGS domain. Residues 243 to 534 (DHRKIGKQLD…LTEEFAGFFP (292 aa)) are catalytic. K286 is subject to N6-acetyllysine. Positions 334, 385, and 511 each coordinate Zn(2+).

It belongs to the class-II aminoacyl-tRNA synthetase family. Homodimer. Requires Zn(2+) as cofactor.

Its subcellular location is the cytoplasm. It carries out the reaction tRNA(Thr) + L-threonine + ATP = L-threonyl-tRNA(Thr) + AMP + diphosphate + H(+). Its function is as follows. Catalyzes the attachment of threonine to tRNA(Thr) in a two-step reaction: L-threonine is first activated by ATP to form Thr-AMP and then transferred to the acceptor end of tRNA(Thr). Also edits incorrectly charged L-seryl-tRNA(Thr). The sequence is that of Threonine--tRNA ligase from Escherichia coli O157:H7.